A 200-amino-acid chain; its full sequence is ATP-dependent Clp protease proteolytic subunit 2 (200 aa).

The active-site Nucleophile is Ser-96. The active site involves His-121.

This sequence belongs to the peptidase S14 family. In terms of assembly, fourteen ClpP subunits assemble into 2 heptameric rings which stack back to back to give a disk-like structure with a central cavity, resembling the structure of eukaryotic proteasomes.

The protein localises to the cytoplasm. It carries out the reaction Hydrolysis of proteins to small peptides in the presence of ATP and magnesium. alpha-casein is the usual test substrate. In the absence of ATP, only oligopeptides shorter than five residues are hydrolyzed (such as succinyl-Leu-Tyr-|-NHMec, and Leu-Tyr-Leu-|-Tyr-Trp, in which cleavage of the -Tyr-|-Leu- and -Tyr-|-Trp bonds also occurs).. Cleaves peptides in various proteins in a process that requires ATP hydrolysis. Has a chymotrypsin-like activity. Plays a major role in the degradation of misfolded proteins. The sequence is that of ATP-dependent Clp protease proteolytic subunit 2 from Synechococcus sp. (strain JA-2-3B'a(2-13)) (Cyanobacteria bacterium Yellowstone B-Prime).